We begin with the raw amino-acid sequence, 562 residues long: NAD-dependent malic enzyme (562 aa).

The Proton donor role is filled by tyrosine 101. NAD(+) is bound at residue arginine 154. Lysine 172 acts as the Proton acceptor in catalysis. Glutamate 243, aspartate 244, and aspartate 267 together coordinate a divalent metal cation. The NAD(+) site is built by aspartate 267 and asparagine 415.

This sequence belongs to the malic enzymes family. Homotetramer. Mg(2+) serves as cofactor. Requires Mn(2+) as cofactor.

It catalyses the reaction (S)-malate + NAD(+) = pyruvate + CO2 + NADH. The catalysed reaction is oxaloacetate + H(+) = pyruvate + CO2. The sequence is that of NAD-dependent malic enzyme from Shewanella halifaxensis (strain HAW-EB4).